The primary structure comprises 68 residues: Cytotoxic linear peptide (68 aa).

The first 23 residues, 1–23 (MKTQFAILLIALVLFQMFSQSEA), serve as a signal peptide directing secretion. L36 is modified (leucine amide). Positions 40–68 (GLNELDDLDELFDGEISQADIDFLKELMS) are excised as a propeptide.

Belongs to the non-disulfide-bridged peptide (NDBP) superfamily. Short antimicrobial peptide (group 4) family. As to expression, expressed by the venom gland.

The protein localises to the secreted. Its subcellular location is the target cell membrane. Amphipathic peptide that has antibacterial activities. The polypeptide is Cytotoxic linear peptide (Pandinus cavimanus (Tanzanian red clawed scorpion)).